The following is a 271-amino-acid chain: 5-deoxy-glucuronate isomerase (271 aa).

It belongs to the isomerase IolB family.

It carries out the reaction 5-deoxy-D-glucuronate = 5-dehydro-2-deoxy-D-gluconate. It functions in the pathway polyol metabolism; myo-inositol degradation into acetyl-CoA; acetyl-CoA from myo-inositol: step 4/7. Involved in the isomerization of 5-deoxy-glucuronate (5DG) to 5-dehydro-2-deoxy-D-gluconate (DKG or 2-deoxy-5-keto-D-gluconate). The protein is 5-deoxy-glucuronate isomerase of Lacticaseibacillus casei (Lactobacillus casei).